Consider the following 157-residue polypeptide: Regenerating islet-derived protein 4 (157 aa).

An N-terminal signal peptide occupies residues 1–22 (MASKGVRLLLLLSWVAGPEVLS). A disulfide bridge links cysteine 29 with cysteine 40. A C-type lectin domain is found at 36 to 154 (YRSHCYGYFR…CANRQHFLCK (119 aa)). Asparagine 49 and asparagine 62 each carry an N-linked (GlcNAc...) asparagine glycan. Cystine bridges form between cysteine 57/cysteine 153 and cysteine 128/cysteine 145. A carbohydrate contacts are provided by residues 97–102 (DPQKKQ) and 134–136 (KDK).

It is found in the secreted. Calcium-independent lectin displaying mannose-binding specificity and able to maintain carbohydrate recognition activity in an acidic environment. May be involved in inflammatory and metaplastic responses of the gastrointestinal epithelium. The sequence is that of Regenerating islet-derived protein 4 (Reg4) from Mus musculus (Mouse).